A 287-amino-acid chain; its full sequence is Ethylene-inducing xylanase 3 (287 aa).

The N-terminal stretch at 1-19 is a signal peptide; it reads MVCFSSLFVAASAIAVVFA. The GH11 domain occupies 31-219; that stretch reads QSTPSSQGTH…SSGSARINVA (189 aa). Catalysis depends on E115, which acts as the Nucleophile. The Proton donor role is filled by E206. The CBM1 domain maps to 252-287; that stretch reads SCAARWGQCGGSGWNGATCCSAGTCQAQNQWYSQCL.

Belongs to the glycosyl hydrolase 11 (cellulase G) family.

The catalysed reaction is Endohydrolysis of (1-&gt;4)-beta-D-xylosidic linkages in xylans.. It participates in glycan degradation; xylan degradation. Functionally, endo-1,4-beta-xylanase involved in the hydrolysis of xylan, a major structural heterogeneous polysaccharide found in plant biomass representing the second most abundant polysaccharide in the biosphere, after cellulose. Exhibits immunity-inducing activity and induces cell death in Nicotiana benthamiana. In Verticillium longisporum (Verticillium dahliae var. longisporum), this protein is Ethylene-inducing xylanase 3.